The following is a 46-amino-acid chain: Lariatin (46 aa).

Residues 1 to 26 (MTSQPSKKTYNAPSLVQRGKFARTTA) constitute a propeptide that is removed on maturation. A cross-link (isoglutamyl glycine isopeptide (Gly-Glu)) is located at residues 27–34 (GSQLVYRE).

Post-translationally, the linear precursor LarA is probably cleaved by the putative peptidase LarD, generating linear 18-residue Lariatin-A or 20-residue Lariatin-B. These linear peptides are probably cross-linked by LarB. Finally, lariatins A and B may be exported by ABC transporter LarE.

Its function is as follows. Peptide antibiotic with selective activity against Mycobacterium species (M.smegmatis, MIC=3.13 ug/ml and M.tuberculosis, MIC=0.39 ug/ml). it is plausible that the target of lariatins lies within the cell wall in mycobacteria. Functionally, peptide antibiotic with selective activity against Mycobacterium species (M.smegmatis, MIC=6.25 ug/ml). In Rhodococcus jostii, this protein is Lariatin.